Reading from the N-terminus, the 506-residue chain is Histone deacetylase complex subunit CTI6 (506 aa).

The interval 49-71 is disordered; the sequence is EESVKQEDVPMEGGEGEVEEEEG. Over residues 62 to 71 the composition is skewed to acidic residues; the sequence is GEGEVEEEEG. The PHD-type zinc finger occupies 72-123; it reads ETRCICGELDTPDDSGFFIQCEQCSSWQHGYCVSITQDNAPDKYWCEQCRPE. The tract at residues 138 to 425 is disordered; the sequence is IYKPVQEKRR…KPRLPPQRTS (288 aa). Position 174 is a phosphothreonine (T174). Phosphoserine is present on S175. Phosphothreonine is present on T177. Positions 179–195 are enriched in acidic residues; that stretch reads DNVDDIGDEEDEVEDEA. Residues S216 and S267 each carry the phosphoserine modification. 2 stretches are compositionally biased toward basic and acidic residues: residues 231–271 and 312–342; these read DSDK…HQED and DDMK…EKES. Residues 373–393 are compositionally biased toward basic residues; it reads ASSRGSKRVSKPARKGNRTRR. Over residues 394 to 404 the composition is skewed to polar residues; sequence SNTSSDTNQNR. The span at 405–415 shows a compositional bias: basic and acidic residues; that stretch reads RSADIGTDKPV.

As to quaternary structure, component of the RPD3C(L) complex composed of at least ASH1, CTI6, DEP1, PHO23, RPD3, RXT2, RXT3, SAP30, SDS3, SIN3, UME1 and UME6. Interacts with CYC8.

It localises to the nucleus. Functionally, component of the RPD3C(L) histone deacetylase complex (HDAC). Responsible for the deacetylation of lysine residues on the N-terminal part of the core histones (H2A, H2B, H3 and H4). Histone deacetylation gives a tag for epigenetic repression and plays an important role in transcriptional regulation, cell cycle progression and developmental events. CTI6 links the SAGA coactivator to the CYC8-TUP1 corepressor. Involved in transcription regulation of heme-regulated genes and required for GCN5 recruitment, histone H3 acetylation and SPT15/TBP binding to promoters. This chain is Histone deacetylase complex subunit CTI6 (CTI6), found in Saccharomyces cerevisiae (strain ATCC 204508 / S288c) (Baker's yeast).